We begin with the raw amino-acid sequence, 218 residues long: Small ribosomal subunit protein uS3c (218 aa).

A KH type-2 domain is found at 43–118 (IKNYVQKNMK…KLNISITRIE (76 aa)).

It belongs to the universal ribosomal protein uS3 family. As to quaternary structure, part of the 30S ribosomal subunit.

Its subcellular location is the plastid. The protein localises to the chloroplast. The polypeptide is Small ribosomal subunit protein uS3c (rps3) (Populus alba (White poplar)).